Reading from the N-terminus, the 403-residue chain is Argininosuccinate synthase (403 aa).

10 to 18 (AYSGGLDTS) is an ATP binding site. Y87 contributes to the L-citrulline binding site. Position 117 (G117) interacts with ATP. L-aspartate contacts are provided by T119, N123, and D124. N123 is a binding site for L-citrulline. L-citrulline-binding residues include R127, S175, E260, and Y272.

This sequence belongs to the argininosuccinate synthase family. Type 1 subfamily. Homotetramer.

It localises to the cytoplasm. The catalysed reaction is L-citrulline + L-aspartate + ATP = 2-(N(omega)-L-arginino)succinate + AMP + diphosphate + H(+). The protein operates within amino-acid biosynthesis; L-arginine biosynthesis; L-arginine from L-ornithine and carbamoyl phosphate: step 2/3. This chain is Argininosuccinate synthase, found in Bacillus subtilis (strain 168).